The primary structure comprises 339 residues: Leucine-rich repeat-containing protein 75A (339 aa).

Positions 1 to 25 (MGTRQTKGSLAERASPGAAPGPRRE) are disordered. The span at 11-21 (AERASPGAAPG) shows a compositional bias: low complexity. LRR repeat units follow at residues 203-216 (VDSV…LTDD) and 228-241 (LPRL…GNRL). The disordered stretch occupies residues 294 to 339 (LPTILELGEGPGTGEEAREGTDQQDPIGSPVTPARGQESTECVIQT). Phosphoserine is present on Ser322. Position 325 is a phosphothreonine (Thr325). A compositionally biased stretch (polar residues) spans 330-339 (QESTECVIQT).

The protein belongs to the LRRC75 family.

The sequence is that of Leucine-rich repeat-containing protein 75A (Lrrc75a) from Mus musculus (Mouse).